The primary structure comprises 254 residues: MGAVEGLTEFLPVSSTGHMILTGHLIGFDDDRAKVFEVVIQLGSILAVVVIFWKRLWSLVGIGKVTDGPSLNLLHIIIGMIPAGVLGVLFHSAIKEVLFGPGPVVISLVAGGILMIVAEKFSKPSTARTLDEITYKQAFTIGMFQCLALWPGFSRSGSTISGGLLARVSHTAAAEYTFILAVPMMVAASGLDLIKSWDILSTADIPLFATGFITAFVVAMLAIVSFLKLLSRVKLTPFAYYRFILAAVFYFFIM.

8 helical membrane passes run 8 to 28, 33 to 53, 74 to 94, 97 to 117, 133 to 153, 174 to 194, 207 to 227, and 233 to 253; these read TEFL…LIGF, AKVF…VIFW, LHII…HSAI, VLFG…LMIV, ITYK…WPGF, AEYT…LDLI, LFAT…VSFL, and VKLT…YFFI.

Belongs to the UppP family.

The protein localises to the cell membrane. The catalysed reaction is di-trans,octa-cis-undecaprenyl diphosphate + H2O = di-trans,octa-cis-undecaprenyl phosphate + phosphate + H(+). Its function is as follows. Catalyzes the dephosphorylation of undecaprenyl diphosphate (UPP). Confers resistance to bacitracin. The protein is Undecaprenyl-diphosphatase 3 of Bacillus thuringiensis (strain Al Hakam).